The primary structure comprises 309 residues: MRNIVVGSRRSKLALTQTKWVINELKQLGAPFTFEVKEIVTKGDRVLDVTLSKVGGKGLFVKEIEHELLAGGIDMAVHSMKDMPAVLPEGLVIGAVSRREDARDVLVSKGNRMLSDLPPGSVIGTSSLRRSAQLLAYRPDLTIKWIRGNIDTRLAKLESEEYDAIVLAAAGLARMGWGDDVISDYLPFDVCVPAVGQGALAVECREDDDELRQWLSRLNDEQTERAVRAERAFLQQMEGGCQVPIAGYAEVKEGTVRLTALVASPDGKEMYKEIVTGADPEAVGRQAAAILSEQGAKALIERVKKELGD.

At C241 the chain carries S-(dipyrrolylmethanemethyl)cysteine.

Belongs to the HMBS family. Monomer. The cofactor is dipyrromethane.

The catalysed reaction is 4 porphobilinogen + H2O = hydroxymethylbilane + 4 NH4(+). It functions in the pathway porphyrin-containing compound metabolism; protoporphyrin-IX biosynthesis; coproporphyrinogen-III from 5-aminolevulinate: step 2/4. Its function is as follows. Tetrapolymerization of the monopyrrole PBG into the hydroxymethylbilane pre-uroporphyrinogen in several discrete steps. The chain is Porphobilinogen deaminase from Geobacillus kaustophilus (strain HTA426).